Reading from the N-terminus, the 161-residue chain is Dihydrofolate reductase type 1 from Tn4003 (161 aa).

Positions 2 to 157 (TLSIIVAHDK…IPHTFLHLVR (156 aa)) constitute a DHFR domain. Substrate is bound at residue 6 to 8 (IVA). Residues 7-8 (VA) and 15-20 (IGYQNQ) contribute to the NADP(+) site. A substrate-binding site is contributed by D28. NADP(+) is bound at residue 44-47 (ARKT). Position 58 (R58) interacts with substrate. NADP(+) is bound by residues 63 to 66 (LTNQ) and 93 to 98 (FGGQTL). Position 112 (T112) interacts with substrate.

This sequence belongs to the dihydrofolate reductase family.

The enzyme catalyses (6S)-5,6,7,8-tetrahydrofolate + NADP(+) = 7,8-dihydrofolate + NADPH + H(+). Its pathway is cofactor biosynthesis; tetrahydrofolate biosynthesis; 5,6,7,8-tetrahydrofolate from 7,8-dihydrofolate: step 1/1. Its function is as follows. Key enzyme in folate metabolism. Catalyzes an essential reaction for de novo glycine and purine synthesis, and for DNA precursor synthesis. This is Dihydrofolate reductase type 1 from Tn4003 (dfrA) from Staphylococcus aureus.